Here is a 452-residue protein sequence, read N- to C-terminus: Pup--protein ligase (452 aa).

E9 is a Mg(2+) binding site. R53 is a binding site for ATP. Position 55 (Y55) interacts with Mg(2+). Residue D57 is the Proton acceptor of the active site. Residue E63 coordinates Mg(2+). ATP-binding residues include T66 and W419.

This sequence belongs to the Pup ligase/Pup deamidase family. Pup-conjugating enzyme subfamily.

It catalyses the reaction ATP + [prokaryotic ubiquitin-like protein]-L-glutamate + [protein]-L-lysine = ADP + phosphate + N(6)-([prokaryotic ubiquitin-like protein]-gamma-L-glutamyl)-[protein]-L-lysine.. The protein operates within protein degradation; proteasomal Pup-dependent pathway. Its pathway is protein modification; protein pupylation. In terms of biological role, catalyzes the covalent attachment of the prokaryotic ubiquitin-like protein modifier Pup to the proteasomal substrate proteins, thereby targeting them for proteasomal degradation. This tagging system is termed pupylation. The ligation reaction involves the side-chain carboxylate of the C-terminal glutamate of Pup and the side-chain amino group of a substrate lysine. The chain is Pup--protein ligase from Gordonia bronchialis (strain ATCC 25592 / DSM 43247 / BCRC 13721 / JCM 3198 / KCTC 3076 / NBRC 16047 / NCTC 10667) (Rhodococcus bronchialis).